A 168-amino-acid polypeptide reads, in one-letter code: Bifunctional protein PyrR (168 aa).

Substrate is bound by residues 36-37 (TG), Arg77, 94-102 (DDVLMSGRT), and Val151. The PRPP-binding motif lies at 90–102 (LVLIDDVLMSGRT).

This sequence belongs to the purine/pyrimidine phosphoribosyltransferase family. PyrR subfamily.

The catalysed reaction is UMP + diphosphate = 5-phospho-alpha-D-ribose 1-diphosphate + uracil. Functionally, regulates the transcription of the pyrimidine nucleotide (pyr) operon in response to exogenous pyrimidines. Also displays a weak uracil phosphoribosyltransferase activity which is not physiologically significant. This is Bifunctional protein PyrR from Pseudomonas fluorescens.